Consider the following 475-residue polypeptide: tRNA modification GTPase MnmE (475 aa).

(6S)-5-formyl-5,6,7,8-tetrahydrofolate is bound by residues Arg24, Glu81, and Lys124. One can recognise a TrmE-type G domain in the interval 220–397 (GLSVVLAGQP…LRRELLRLVG (178 aa)). K(+) is bound at residue Asn230. GTP-binding positions include 230 to 235 (NVGKSS), 249 to 255 (TPIAGTT), 274 to 277 (DTAG), and 378 to 380 (SAR). Ser234 is a Mg(2+) binding site. The K(+) site is built by Thr249, Ile251, and Thr254. Thr255 provides a ligand contact to Mg(2+). Lys475 serves as a coordination point for (6S)-5-formyl-5,6,7,8-tetrahydrofolate.

The protein belongs to the TRAFAC class TrmE-Era-EngA-EngB-Septin-like GTPase superfamily. TrmE GTPase family. Homodimer. Heterotetramer of two MnmE and two MnmG subunits. Requires K(+) as cofactor.

The protein localises to the cytoplasm. Functionally, exhibits a very high intrinsic GTPase hydrolysis rate. Involved in the addition of a carboxymethylaminomethyl (cmnm) group at the wobble position (U34) of certain tRNAs, forming tRNA-cmnm(5)s(2)U34. In Cupriavidus necator (strain ATCC 17699 / DSM 428 / KCTC 22496 / NCIMB 10442 / H16 / Stanier 337) (Ralstonia eutropha), this protein is tRNA modification GTPase MnmE.